Consider the following 81-residue polypeptide: uncharacterized protein (81 aa).

This is an uncharacterized protein from Carnobacterium maltaromaticum (Carnobacterium piscicola).